The chain runs to 511 residues: Glucans biosynthesis protein G (511 aa).

The signal sequence occupies residues 1–22 (MMKMRWLSAAVMLTLYTSSSWA).

It belongs to the OpgD/OpgG family.

The protein localises to the periplasm. It functions in the pathway glycan metabolism; osmoregulated periplasmic glucan (OPG) biosynthesis. Involved in the biosynthesis of osmoregulated periplasmic glucans (OPGs). In Shigella boydii serotype 4 (strain Sb227), this protein is Glucans biosynthesis protein G.